We begin with the raw amino-acid sequence, 202 residues long: CASP-like protein 2B2 (202 aa).

The Cytoplasmic portion of the chain corresponds to 1-29 (MSYLGVGVSPGNVPVYHGMNLKVIDRRVR). Residues 30–50 (LAELVLRCVICALGVLAAVLV) form a helical membrane-spanning segment. The Extracellular segment spans residues 51–72 (GTDTQVKEIFSIQKKARFTDMK). Residues 73–93 (ALVFLVVANGIAAAYSLVQGV) form a helical membrane-spanning segment. The Cytoplasmic segment spans residues 94 to 118 (RCVVGMVKGSVLFSKPLAWVIFSGD). The chain crosses the membrane as a helical span at residues 119–139 (QMMAYLTLSAVAAAVQSASFA). Over 140–164 (KLGQPDLQWMKICNMYGKFCNQVGE) the chain is Extracellular. A helical transmembrane segment spans residues 165 to 185 (GIASALLVSVSMVVLSCISSF). Residues 186 to 202 (SLFRLYGGNKGKDGARW) lie on the Cytoplasmic side of the membrane.

It belongs to the Casparian strip membrane proteins (CASP) family. Homodimer and heterodimers.

It localises to the cell membrane. This chain is CASP-like protein 2B2, found in Populus trichocarpa (Western balsam poplar).